Consider the following 395-residue polypeptide: Gastric triacylglycerol lipase (395 aa).

The first 18 residues, 1 to 18 (MWLLLVTSVLSAFGGAHG), serve as a signal peptide directing secretion. N-linked (GlcNAc...) asparagine glycosylation is present at Asn-33. The AB hydrolase-1 domain occupies 81–376 (LQHGLIASAT…LPYNHLDFIW (296 aa)). The active-site Nucleophile is Ser-171. A disulfide bridge connects residues Cys-245 and Cys-254. An N-linked (GlcNAc...) asparagine glycan is attached at Asn-270. Residues Asp-342 and His-371 each act as charge relay system in the active site.

Belongs to the AB hydrolase superfamily. Lipase family.

The protein localises to the secreted. It carries out the reaction a triacylglycerol + H2O = a diacylglycerol + a fatty acid + H(+). The enzyme catalyses 1,2,3-tri-(9Z-octadecenoyl)-glycerol + H2O = 1,2-di-(9Z-octadecenoyl)-sn-glycerol + (9Z)-octadecenoate + H(+). The catalysed reaction is 1,2,3-trioctanoylglycerol + H2O = 1,2-dioctanoyl-sn-glycerol + octanoate + H(+). Catalyzes the hydrolysis of triacylglycerols to yield free fatty acids, diacylglycerol, monoacylglycerol, and glycerol. Shows a preferential hydrolysis at the sn-3 position of triacylglycerol. The chain is Gastric triacylglycerol lipase (Lipf) from Mus musculus (Mouse).